The primary structure comprises 207 residues: Dephospho-CoA kinase (207 aa).

The DPCK domain occupies 4-203 (VIGLTGGIAS…EEGYIEKPNY (200 aa)). 12–17 (ASGKST) serves as a coordination point for ATP.

Belongs to the CoaE family.

Its subcellular location is the cytoplasm. It catalyses the reaction 3'-dephospho-CoA + ATP = ADP + CoA + H(+). It functions in the pathway cofactor biosynthesis; coenzyme A biosynthesis; CoA from (R)-pantothenate: step 5/5. Catalyzes the phosphorylation of the 3'-hydroxyl group of dephosphocoenzyme A to form coenzyme A. The polypeptide is Dephospho-CoA kinase (Staphylococcus aureus (strain MRSA252)).